The following is a 226-amino-acid chain: LexA repressor (226 aa).

A DNA-binding region (H-T-H motif) is located at residues 28-48 (RAEICQSLGFRSPNAAESHLR). Catalysis depends on for autocatalytic cleavage activity residues Ser-133 and Lys-170.

It belongs to the peptidase S24 family. Homodimer.

The enzyme catalyses Hydrolysis of Ala-|-Gly bond in repressor LexA.. Its function is as follows. Represses a number of genes involved in the response to DNA damage (SOS response), including recA and lexA. In the presence of single-stranded DNA, RecA interacts with LexA causing an autocatalytic cleavage which disrupts the DNA-binding part of LexA, leading to derepression of the SOS regulon and eventually DNA repair. This Halorhodospira halophila (strain DSM 244 / SL1) (Ectothiorhodospira halophila (strain DSM 244 / SL1)) protein is LexA repressor.